We begin with the raw amino-acid sequence, 267 residues long: Small ribosomal subunit protein uS2 (267 aa).

Positions 224–244 are disordered; the sequence is GRQGEDEDVTEDSFKDNKDAK. A compositionally biased stretch (basic and acidic residues) spans 235-244; that stretch reads DSFKDNKDAK.

This sequence belongs to the universal ribosomal protein uS2 family.

In Lactiplantibacillus plantarum (strain ATCC BAA-793 / NCIMB 8826 / WCFS1) (Lactobacillus plantarum), this protein is Small ribosomal subunit protein uS2.